A 177-amino-acid polypeptide reads, in one-letter code: Adenine phosphoribosyltransferase (177 aa).

It belongs to the purine/pyrimidine phosphoribosyltransferase family. Homodimer.

The protein resides in the cytoplasm. The catalysed reaction is AMP + diphosphate = 5-phospho-alpha-D-ribose 1-diphosphate + adenine. It participates in purine metabolism; AMP biosynthesis via salvage pathway; AMP from adenine: step 1/1. Its function is as follows. Catalyzes a salvage reaction resulting in the formation of AMP, that is energically less costly than de novo synthesis. This Leuconostoc citreum (strain KM20) protein is Adenine phosphoribosyltransferase.